Here is a 155-residue protein sequence, read N- to C-terminus: Fibroblast growth factor 2 (155 aa).

Residues 1 to 9 (MAAGSITTL) constitute a propeptide that is removed on maturation. The interval 1-20 (MAAGSITTLPALPEDGGSGA) is disordered. Heparin is bound at residue N36. The short motif at 46 to 48 (DGR) is the Cell attachment site; atypical element. Y82 is subject to Phosphotyrosine; by TEC. The short motif at 88-90 (DGR) is the Cell attachment site; atypical element. A Glycyl lysine isopeptide (Lys-Gly) (interchain with G-Cter in SUMO1) cross-link involves residue K95. The interval 128–144 (KRTGQYKLGPKTGPGQK) is heparin-binding.

Belongs to the heparin-binding growth factors family. In terms of assembly, monomer. Homodimer. Interacts with FGFR1, FGFR2, FGFR3 and FGFR4. Affinity between fibroblast growth factors (FGFs) and their receptors is increased by heparan sulfate glycosaminoglycans that function as coreceptors. Interacts with CSPG4, FGFBP1 and TEC. Found in a complex with FGFBP1, FGF1 and FGF2. Interacts with FGFBP3. Interacts with integrin ITGAV:ITGB3; the interaction is required for FGF2 signaling. Interacts with SNORC (via the extracellular domain). Interacts with glypican GPC3. In terms of processing, phosphorylation at Tyr-82 regulates FGF2 unconventional secretion.

It localises to the secreted. Its subcellular location is the nucleus. Its function is as follows. Acts as a ligand for FGFR1, FGFR2, FGFR3 and FGFR4. Also acts as an integrin ligand which is required for FGF2 signaling. Binds to integrin ITGAV:ITGB3. Plays an important role in the regulation of cell survival, cell division, cell differentiation and cell migration. Functions as a potent mitogen in vitro. Can induce angiogenesis. Mediates phosphorylation of ERK1/2 and thereby promotes retinal lens fiber differentiation. The polypeptide is Fibroblast growth factor 2 (FGF2) (Bos taurus (Bovine)).